The chain runs to 240 residues: Acetoacetyl-CoA reductase (240 aa).

NADP(+) is bound by residues 18–20 (RGI) and 82–86 (NAGIT). Residues serine 134 and 141-144 (NVGQ) each bind substrate. Tyrosine 147 serves as the catalytic Proton acceptor. Position 177-180 (177-180 (PGFI)) interacts with NADP(+). 178 to 179 (GF) provides a ligand contact to substrate.

It belongs to the short-chain dehydrogenases/reductases (SDR) family.

It catalyses the reaction a (3R)-3-hydroxyacyl-CoA + NADP(+) = a 3-oxoacyl-CoA + NADPH + H(+). It participates in biopolymer metabolism; poly-(R)-3-hydroxybutanoate biosynthesis. Its function is as follows. Catalyzes the reduction of acetoacetyl-CoA to (R)-3-hydroxybutyryl-CoA. When expressed in E.coli with Synechocystis PhaA, PhaC and PhaE confers the ability to synthesize up to 12% (w/w) poly(3-hydroxybutyrate) (PHB) depending on the carbon source. The protein is Acetoacetyl-CoA reductase of Synechocystis sp. (strain ATCC 27184 / PCC 6803 / Kazusa).